The primary structure comprises 81 residues: Large ribosomal subunit protein bL31B (81 aa).

This sequence belongs to the bacterial ribosomal protein bL31 family. Type B subfamily. In terms of assembly, part of the 50S ribosomal subunit.

In Bacillus cereus (strain ATCC 10987 / NRS 248), this protein is Large ribosomal subunit protein bL31B.